The following is a 519-amino-acid chain: Cytochrome P450 monooxygenase apdE (519 aa).

Residues 27-47 (FVFFAFVVYSCFTIAVGWVVY) form a helical membrane-spanning segment. N-linked (GlcNAc...) asparagine glycans are attached at residues Asn-327 and Asn-379. Heme is bound at residue Cys-466. The N-linked (GlcNAc...) asparagine glycan is linked to Asn-508.

Belongs to the cytochrome P450 family. Heme serves as cofactor.

The protein resides in the membrane. Its pathway is secondary metabolite biosynthesis. In terms of biological role, cytochrome P450 monooxygenase; part of the gene cluster that mediates the biosynthesis of aspyridones. The polyketide-amino acid backbone preaspyridone A is first assembled by the PKS-NRPS hybrid apdA. The assembly of preaspyridone A is initiated by loading of malonyl-CoA onto apdA, followed by decarboxylation to yield the acetyl starter unit. The growing polyketide chain then elongates into a tetraketide. The adpA PKS module catalyzes three Claisen condensations, as well as beta-keto processing and methylation. Alpha-methylation step during polyketide synthesis is a prerequisite and a key checkpoint for chain transfer between PKS and NRPS modules. The downstream NRPS module contains the condensation (C), adenylation (A), and thiolation (T) domains and catalyzes the incorporation of tyrosine via the formation of the L-tyrosinyl-thioester and the amide linkage between L-tyrosinyl-thioester and the tetraketide. The bimodular assembly line is terminated with a reductase (R) domain that facilitates formation and release of the tetramic acid product. Because apdA lacks a designated enoylreductase (ER) domain, the required activity is provided the enoyl reductase apdC. ApdC appears to operate with different stereoselectivity in different PKS cycle. Combined with apdC, apdA is proposed to synthesize preaspyridone A via about 20 enzymatic steps. A number of oxidative steps performed successively by the cytochrome P450 monooxygenases apdE and apdB are required for the conversion of preaspyridone A to aspyridone A. The cytochrome P450 monooxygenase apdE is responsible for the oxidative dephenylation of preaspyridone A. Finally, the predicted FAD-dependent monooxygenase apdD and the acyl-CoA dehydrogenase apdG may be involved in the transformation of aspyridone A into aspyridone B. In Emericella nidulans (strain FGSC A4 / ATCC 38163 / CBS 112.46 / NRRL 194 / M139) (Aspergillus nidulans), this protein is Cytochrome P450 monooxygenase apdE.